The chain runs to 250 residues: 2,3-bisphosphoglycerate-dependent phosphoglycerate mutase (250 aa).

Residues 8–15, 21–22, R60, 87–90, K98, 114–115, and 183–184 contribute to the substrate site; these read RHGESQWN, TG, ERHY, RR, and GN. Catalysis depends on H9, which acts as the Tele-phosphohistidine intermediate. E87 serves as the catalytic Proton donor/acceptor.

The protein belongs to the phosphoglycerate mutase family. BPG-dependent PGAM subfamily. Homodimer.

It catalyses the reaction (2R)-2-phosphoglycerate = (2R)-3-phosphoglycerate. Its pathway is carbohydrate degradation; glycolysis; pyruvate from D-glyceraldehyde 3-phosphate: step 3/5. Catalyzes the interconversion of 2-phosphoglycerate and 3-phosphoglycerate. This is 2,3-bisphosphoglycerate-dependent phosphoglycerate mutase from Bordetella pertussis (strain Tohama I / ATCC BAA-589 / NCTC 13251).